The primary structure comprises 779 residues: Probable glutamine--tRNA ligase (779 aa).

ATP contacts are provided by residues 268 to 270 and 274 to 280; these read EPN and HIGHAKA. L-glutamine-binding residues include Asp-300 and Tyr-440. ATP contacts are provided by residues Thr-459, 488-489, and 496-498; these read RL and LSK.

It belongs to the class-I aminoacyl-tRNA synthetase family.

The catalysed reaction is tRNA(Gln) + L-glutamine + ATP = L-glutaminyl-tRNA(Gln) + AMP + diphosphate. The protein is Probable glutamine--tRNA ligase (glnS) of Dictyostelium discoideum (Social amoeba).